A 350-amino-acid chain; its full sequence is Secreted effector protein PipB2 (350 aa).

Pentapeptide repeat domains follow at residues 162 to 201 (ANLTSENLCDADLSGANLEGAVLFMADCEGANFKGANLSG), 202 to 241 (TSLGDSNFKNACLEDSIMCGATLDHANLTGANLQHASLLG), 247 to 286 (CNCSGANMDHTNLSGATLIRADMSGATLQGATIMAAIMEG), and 287 to 326 (AVLTRANLRKASFISTNLDGADLAEANLNNTCFKDCTLTD).

As to quaternary structure, interacts with the host kinesin light chain (KLC), a subunit of the kinesin-1 motor complex.

It localises to the secreted. The protein resides in the host membrane. Its function is as follows. Effector proteins function to alter host cell physiology and promote bacterial survival in host tissues. Involved in the reorganization of late endosome/lysosome (LE/Lys) compartments in mammalian cells. Necessary and sufficient to link kinesin-1 onto the Salmonella-containing vacuole (SCV) membrane. Required for centrifugal extension of lysosomal glycoprotein-rich membrane tubules, known as Salmonella-induced filaments (Sifs), away from the SCV and toward the cell periphery. Required for virulence, but not for intracellular survival and replication in phagocytic cells. In Salmonella typhimurium (strain LT2 / SGSC1412 / ATCC 700720), this protein is Secreted effector protein PipB2 (pipB2).